Consider the following 261-residue polypeptide: Ribonuclease HII (261 aa).

In terms of domain architecture, RNase H type-2 spans 71–259 (KYIAGVDEVG…VKESKLHFDS (189 aa)). A divalent metal cation contacts are provided by aspartate 77, glutamate 78, and aspartate 169.

It belongs to the RNase HII family. Mn(2+) serves as cofactor. Mg(2+) is required as a cofactor.

The protein resides in the cytoplasm. It carries out the reaction Endonucleolytic cleavage to 5'-phosphomonoester.. Its function is as follows. Endonuclease that specifically degrades the RNA of RNA-DNA hybrids. The sequence is that of Ribonuclease HII from Listeria monocytogenes serovar 1/2a (strain ATCC BAA-679 / EGD-e).